The primary structure comprises 80 residues: Exodeoxyribonuclease 7 small subunit (80 aa).

Belongs to the XseB family. Heterooligomer composed of large and small subunits.

The protein resides in the cytoplasm. The enzyme catalyses Exonucleolytic cleavage in either 5'- to 3'- or 3'- to 5'-direction to yield nucleoside 5'-phosphates.. Bidirectionally degrades single-stranded DNA into large acid-insoluble oligonucleotides, which are then degraded further into small acid-soluble oligonucleotides. This Erwinia tasmaniensis (strain DSM 17950 / CFBP 7177 / CIP 109463 / NCPPB 4357 / Et1/99) protein is Exodeoxyribonuclease 7 small subunit.